The sequence spans 293 residues: Small ribosomal subunit biogenesis GTPase RsgA (293 aa).

Positions 63 to 223 (QNELVRPPVA…VADTPGFSAL (161 aa)) constitute a CP-type G domain. GTP contacts are provided by residues 112 to 115 (SKID) and 166 to 174 (GQSGVGKSS). Cys-247, Cys-252, His-254, and Cys-260 together coordinate Zn(2+).

Belongs to the TRAFAC class YlqF/YawG GTPase family. RsgA subfamily. Monomer. Associates with 30S ribosomal subunit, binds 16S rRNA. Requires Zn(2+) as cofactor.

The protein resides in the cytoplasm. Functionally, one of several proteins that assist in the late maturation steps of the functional core of the 30S ribosomal subunit. Helps release RbfA from mature subunits. May play a role in the assembly of ribosomal proteins into the subunit. Circularly permuted GTPase that catalyzes slow GTP hydrolysis, GTPase activity is stimulated by the 30S ribosomal subunit. The sequence is that of Small ribosomal subunit biogenesis GTPase RsgA from Geobacillus thermodenitrificans (strain NG80-2).